The primary structure comprises 148 residues: Arginine repressor (148 aa).

The protein belongs to the ArgR family.

The protein resides in the cytoplasm. Its pathway is amino-acid biosynthesis; L-arginine biosynthesis [regulation]. Its function is as follows. Regulates arginine biosynthesis genes. This is Arginine repressor from Chlorobium phaeobacteroides (strain BS1).